The sequence spans 482 residues: Proline--tRNA ligase (482 aa).

L-proline-binding residues include threonine 117, glutamate 119, and arginine 148. Positions 148, 150, 232, and 235 each coordinate ATP. Histidine 237 lines the L-proline pocket. Serine 269 is a binding site for ATP. Residues 346-376 are interaction with tRNA; sequence EMRGVPLRVEIGPRDLEKGAAVISRRDTGEK. Positions 436, 441, 464, and 467 each coordinate Zn(2+).

The protein belongs to the class-II aminoacyl-tRNA synthetase family. ProS type 3 subfamily. Homodimer. The dimer is functionally asymmetric: only one of the two active sites at a time is able to form prolyl-adenylate, and only one tRNA molecule binds per dimer. Interacts with LeuRS, which enhances tRNA(Pro) aminoacylation.

It is found in the cytoplasm. The enzyme catalyses tRNA(Pro) + L-proline + ATP = L-prolyl-tRNA(Pro) + AMP + diphosphate. In terms of biological role, catalyzes the attachment of proline to tRNA(Pro) in a two-step reaction: proline is first activated by ATP to form Pro-AMP and then transferred to the acceptor end of tRNA(Pro). Can inadvertently accommodate and process cysteine. The polypeptide is Proline--tRNA ligase (proS) (Methanothermobacter thermautotrophicus (strain ATCC 29096 / DSM 1053 / JCM 10044 / NBRC 100330 / Delta H) (Methanobacterium thermoautotrophicum)).